The chain runs to 168 residues: Crossover junction endodeoxyribonuclease RuvC (168 aa).

Residues D8, E68, and D140 contribute to the active site. Residues D8, E68, and D140 each coordinate Mg(2+).

The protein belongs to the RuvC family. As to quaternary structure, homodimer which binds Holliday junction (HJ) DNA. The HJ becomes 2-fold symmetrical on binding to RuvC with unstacked arms; it has a different conformation from HJ DNA in complex with RuvA. In the full resolvosome a probable DNA-RuvA(4)-RuvB(12)-RuvC(2) complex forms which resolves the HJ. The cofactor is Mg(2+).

The protein localises to the cytoplasm. It catalyses the reaction Endonucleolytic cleavage at a junction such as a reciprocal single-stranded crossover between two homologous DNA duplexes (Holliday junction).. Functionally, the RuvA-RuvB-RuvC complex processes Holliday junction (HJ) DNA during genetic recombination and DNA repair. Endonuclease that resolves HJ intermediates. Cleaves cruciform DNA by making single-stranded nicks across the HJ at symmetrical positions within the homologous arms, yielding a 5'-phosphate and a 3'-hydroxyl group; requires a central core of homology in the junction. The consensus cleavage sequence is 5'-(A/T)TT(C/G)-3'. Cleavage occurs on the 3'-side of the TT dinucleotide at the point of strand exchange. HJ branch migration catalyzed by RuvA-RuvB allows RuvC to scan DNA until it finds its consensus sequence, where it cleaves and resolves the cruciform DNA. In Lawsonia intracellularis (strain PHE/MN1-00), this protein is Crossover junction endodeoxyribonuclease RuvC.